The primary structure comprises 291 residues: NAD kinase (291 aa).

Asp-73 functions as the Proton acceptor in the catalytic mechanism. Residues 73-74 (DG), 147-148 (ND), Arg-175, Asp-177, and Gln-246 contribute to the NAD(+) site.

It belongs to the NAD kinase family. A divalent metal cation is required as a cofactor.

It localises to the cytoplasm. The catalysed reaction is NAD(+) + ATP = ADP + NADP(+) + H(+). Involved in the regulation of the intracellular balance of NAD and NADP, and is a key enzyme in the biosynthesis of NADP. Catalyzes specifically the phosphorylation on 2'-hydroxyl of the adenosine moiety of NAD to yield NADP. This is NAD kinase from Chromobacterium violaceum (strain ATCC 12472 / DSM 30191 / JCM 1249 / CCUG 213 / NBRC 12614 / NCIMB 9131 / NCTC 9757 / MK).